A 276-amino-acid polypeptide reads, in one-letter code: Secretagogin (276 aa).

EF-hand domains lie at 12 to 47 (LDAA…MLTK), 71 to 93 (DVSK…EDEN), 105 to 140 (DSSV…LFLH), 149 to 184 (KLEE…QENF), 197 to 232 (ERKR…MMEL), and 240 to 276 (VDLD…KINP). Positions 71, 73, 75, 77, 82, 118, 120, 122, 129, 162, 164, 166, 168, 173, 210, 212, 214, 221, 254, 256, 258, 260, and 265 each coordinate Ca(2+).

The protein localises to the cytoplasm. It localises to the secreted. The protein resides in the cytoplasmic vesicle. Its subcellular location is the secretory vesicle membrane. The protein is Secretagogin (SCGN) of Bos taurus (Bovine).